The chain runs to 977 residues: ELMO domain-containing protein A (977 aa).

Residues 383-561 (EHDALLMKLW…SVKNLIITAL (179 aa)) form the ELMO domain. Low complexity-rich tracts occupy residues 792–838 (SSNN…NNSG) and 852–897 (QQQQ…SSSS). The interval 792–899 (SSNNNIKDNL…SSSSSSSSNP (108 aa)) is disordered.

As to quaternary structure, associates with mhcA.

Functions as a negative regulator of actin polymerization. Modulates actin/myosin II at cortex actinomyosins to prevent excessive F-actin polymerization around the cell periphery, thereby maintaining proper cell shape during phagocytosis and chemotaxis. This is ELMO domain-containing protein A (elmoA) from Dictyostelium discoideum (Social amoeba).